The following is a 715-amino-acid chain: Polyribonucleotide nucleotidyltransferase (715 aa).

Mg(2+) is bound by residues Asp-487 and Asp-493. The 60-residue stretch at 554 to 613 folds into the KH domain; it reads PRIETFKIATDKIREVIGTGGKVIREIVEKTGAKVNIDDDGTVKVASSDGESIKAAIKWI. The S1 motif domain maps to 623 to 691; it reads NAIYDGTVVK…DRGKTRLSMK (69 aa). Positions 696–715 are disordered; sequence ETGEDLEAKQKAAEGATAAE.

Belongs to the polyribonucleotide nucleotidyltransferase family. It depends on Mg(2+) as a cofactor.

It is found in the cytoplasm. It carries out the reaction RNA(n+1) + phosphate = RNA(n) + a ribonucleoside 5'-diphosphate. In terms of biological role, involved in mRNA degradation. Catalyzes the phosphorolysis of single-stranded polyribonucleotides processively in the 3'- to 5'-direction. The sequence is that of Polyribonucleotide nucleotidyltransferase from Rhodopseudomonas palustris (strain BisB18).